A 327-amino-acid polypeptide reads, in one-letter code: Glycerol-3-phosphate acyltransferase (327 aa).

Helical transmembrane passes span 3 to 23 (SLLW…LLFA), 52 to 72 (VGVL…AVAL), 78 to 98 (TVFH…SCFL), 112 to 132 (VFLP…LAVI), and 152 to 172 (MLLL…MVLV). 2 disordered regions span residues 184-212 (SRGE…EAAA) and 233-327 (PSTE…SSGQ). Residues 199–212 (AQGTDAGAAPEAAA) show a composition bias toward low complexity. The segment covering 237–246 (AAPSQETSDA) has biased composition (polar residues). The segment covering 259 to 271 (EGDKRENEEHDNA) has biased composition (basic and acidic residues).

Belongs to the PlsY family. Probably interacts with PlsX.

It localises to the cell inner membrane. It catalyses the reaction an acyl phosphate + sn-glycerol 3-phosphate = a 1-acyl-sn-glycero-3-phosphate + phosphate. The protein operates within lipid metabolism; phospholipid metabolism. In terms of biological role, catalyzes the transfer of an acyl group from acyl-phosphate (acyl-PO(4)) to glycerol-3-phosphate (G3P) to form lysophosphatidic acid (LPA). This enzyme utilizes acyl-phosphate as fatty acyl donor, but not acyl-CoA or acyl-ACP. In Nitratidesulfovibrio vulgaris (strain ATCC 29579 / DSM 644 / CCUG 34227 / NCIMB 8303 / VKM B-1760 / Hildenborough) (Desulfovibrio vulgaris), this protein is Glycerol-3-phosphate acyltransferase.